The sequence spans 269 residues: Cytochrome c oxidase subunit 3 (269 aa).

Residues 1-22 lie on the Mitochondrial matrix side of the membrane; that stretch reads MTNLIRSNFQDHPFHLVSPSPW. The helical transmembrane segment at 23–41 threads the bilayer; it reads PLNTSVCLLNLTTTGALSM. Topologically, residues 42 to 48 are mitochondrial intermembrane; sequence HNFNNIH. Residues 49–73 form a helical membrane-spanning segment; that stretch reads YLYYIALIGLVSAMFLWFRDIISEG. Topologically, residues 74-80 are mitochondrial matrix; the sequence is TFLGDHT. The chain crosses the membrane as a helical span at residues 81 to 114; it reads LAVQRGLNLGIILFIVSEALFFLAIFWAFFHSAL. At 115-137 the chain is on the mitochondrial intermembrane side; sequence TPTVELGAQWPPIGIEPVNPFEL. Residues 138 to 161 form a helical membrane-spanning segment; the sequence is PLLNTVILLSSGATITYAHHALIK. At 162–164 the chain is on the mitochondrial matrix side; sequence GER. Residues 165 to 188 form a helical membrane-spanning segment; the sequence is EGALYGSIATILLAIIFTGFQGVE. Residues 189–201 are Mitochondrial intermembrane-facing; it reads YSVSSFTISDGAF. A helical membrane pass occupies residues 202-230; it reads GTCFFFSTGFHGIHVIIGTIFLAVALWRI. The Mitochondrial matrix segment spans residues 231 to 248; that stretch reads FAYHLTDNHHVGFEGGIL. A helical transmembrane segment spans residues 249-265; the sequence is YWHFVDVVWLFLYISVY. The Mitochondrial intermembrane portion of the chain corresponds to 266–269; sequence YWGS.

This sequence belongs to the cytochrome c oxidase subunit 3 family. As to quaternary structure, component of the cytochrome c oxidase (complex IV, CIV), a multisubunit enzyme composed of 11 subunits. The complex is composed of a catalytic core of 3 subunits Cox1, Cox2 and Cox3, encoded in the mitochondrial DNA, and 8 supernumerary subunits Cox4, Cox5a/Cox5, Cox6, Cox7, Cox8, Cox7a/Cox9, Cox6b/Cox12 and Cox6a/Cox13, which are encoded in the nuclear genome. The complex exists as a monomer or a dimer and forms respiratory supercomplexes (SCs) in the inner mitochondrial membrane with NADH-ubiquinone oxidoreductase (complex I, CI) and ubiquinol-cytochrome c oxidoreductase (cytochrome b-c1 complex, complex III, CIII), resulting in various different assemblies (supercomplexes I(1)IV(1), I(1)III(3)IV(2), III(2)IV(1) and III(2)IV(2) as well as larger supercomplexes of compositions like I(1)III(2)IV(5-6)).

It is found in the mitochondrion inner membrane. The catalysed reaction is 4 Fe(II)-[cytochrome c] + O2 + 8 H(+)(in) = 4 Fe(III)-[cytochrome c] + 2 H2O + 4 H(+)(out). Component of the cytochrome c oxidase, the last enzyme in the mitochondrial electron transport chain which drives oxidative phosphorylation. The respiratory chain contains 3 multisubunit complexes succinate dehydrogenase (complex II, CII), ubiquinol-cytochrome c oxidoreductase (cytochrome b-c1 complex, complex III, CIII) and cytochrome c oxidase (complex IV, CIV), that cooperate to transfer electrons derived from NADH and succinate to molecular oxygen, creating an electrochemical gradient over the inner membrane that drives transmembrane transport and the ATP synthase. Cytochrome c oxidase is the component of the respiratory chain that catalyzes the reduction of oxygen to water. Electrons originating from reduced cytochrome c in the intermembrane space (IMS) are transferred via the dinuclear copper A center (CU(A)) of Cox2 and heme A of Cox1 to the active site in Cox1, a binuclear center (BNC) formed by heme A3 and copper B (CU(B)). The BNC reduces molecular oxygen to 2 water molecules using 4 electrons from cytochrome c in the IMS and 4 protons from the mitochondrial matrix. The chain is Cytochrome c oxidase subunit 3 (cox-3) from Neurospora crassa (strain ATCC 24698 / 74-OR23-1A / CBS 708.71 / DSM 1257 / FGSC 987).